A 471-amino-acid chain; its full sequence is Putative multidrug resistance protein MdtD (471 aa).

The Periplasmic portion of the chain corresponds to 1–12; it reads MTDLPDSTRWQL. The chain crosses the membrane as a helical span at residues 13–33; that stretch reads WIVAFGFFMQSLDTTIVNTAI. At 34-48 the chain is on the cytoplasmic side; it reads PSMAQSLGESPLHMH. Residues 49–69 traverse the membrane as a helical segment; the sequence is MVIVSYVLTVAVMLPASGWLA. At 70 to 76 the chain is on the periplasmic side; the sequence is DKVGVRN. Residues 77–97 traverse the membrane as a helical segment; sequence IFFTAIVLFTLGSLFCALSGT. Topologically, residues 98-101 are cytoplasmic; sequence LNEL. The chain crosses the membrane as a helical span at residues 102-124; that stretch reads LLARALQGVGGAMMVPVGRLTVM. Residues 125 to 137 lie on the Periplasmic side of the membrane; that stretch reads KIVPREQYMAAMT. The chain crosses the membrane as a helical span at residues 138 to 158; it reads FVTLPGQVGPLLGPALGGLLV. The Cytoplasmic segment spans residues 159 to 164; the sequence is EYASWH. The chain crosses the membrane as a helical span at residues 165–185; sequence WIFLINIPVGIIGAIATLMLM. The Periplasmic segment spans residues 186–196; sequence PNYTMQTRRFD. A helical transmembrane segment spans residues 197–217; the sequence is LSGFLLLAVGMAVLTLALDGS. At 218–224 the chain is on the cytoplasmic side; it reads KGTGLSP. A helical membrane pass occupies residues 225 to 245; sequence LAIAGLVAVGVVALVLYLLHA. Topologically, residues 246 to 262 are periplasmic; it reads RNNNRALFSLKLFRTRT. Residues 263 to 283 traverse the membrane as a helical segment; it reads FSLGLAGSFAGRIGSGMLPFM. Residues 284–285 lie on the Cytoplasmic side of the membrane; sequence TP. The chain crosses the membrane as a helical span at residues 286–306; sequence VFLQIGLGFSPFHAGLMMIPM. Residues 307 to 341 are Periplasmic-facing; sequence VLGSMGMKRIVVQVVNRFGYRRVLVATTLGLSLVT. A helical membrane pass occupies residues 342 to 362; that stretch reads LLFMTTALLGWYYVLPFVLFL. Residues 363-395 lie on the Cytoplasmic side of the membrane; the sequence is QGMVNSTRFSSMNTLTLKDLPDNLASSGNSLLS. A helical transmembrane segment spans residues 396 to 416; it reads MIMQLSMSIGVTIAGLLLGLF. The Periplasmic segment spans residues 417–430; that stretch reads GSQHVSVDSGTTQT. A helical transmembrane segment spans residues 431–451; that stretch reads VFMYTWLSMAFIIALPAFIFA. At 452–471 the chain is on the cytoplasmic side; sequence RVPNDTHQNVAISRRKRSAQ.

This sequence belongs to the major facilitator superfamily. TCR/Tet family.

It is found in the cell inner membrane. This is Putative multidrug resistance protein MdtD from Shigella flexneri serotype 5b (strain 8401).